A 216-amino-acid chain; its full sequence is Uracil phosphoribosyltransferase (216 aa).

Residues R84, R109, and 137–145 (DPMLATGNT) each bind 5-phospho-alpha-D-ribose 1-diphosphate. Residues I202 and 207–209 (GDA) each bind uracil. Position 208 (D208) interacts with 5-phospho-alpha-D-ribose 1-diphosphate.

The protein belongs to the UPRTase family. Mg(2+) is required as a cofactor.

The enzyme catalyses UMP + diphosphate = 5-phospho-alpha-D-ribose 1-diphosphate + uracil. Its pathway is pyrimidine metabolism; UMP biosynthesis via salvage pathway; UMP from uracil: step 1/1. Allosterically activated by GTP. Its function is as follows. Catalyzes the conversion of uracil and 5-phospho-alpha-D-ribose 1-diphosphate (PRPP) to UMP and diphosphate. The polypeptide is Uracil phosphoribosyltransferase (Synechocystis sp. (strain ATCC 27184 / PCC 6803 / Kazusa)).